The chain runs to 473 residues: Pyruvate kinase (473 aa).

R32 is a substrate binding site. Positions 34, 36, 66, and 67 each coordinate K(+). 34-37 (NFSH) is a binding site for ATP. R73 and K155 together coordinate ATP. E221 serves as a coordination point for Mg(2+). Substrate is bound by residues G244, D245, and T277. Residue D245 coordinates Mg(2+).

The protein belongs to the pyruvate kinase family. As to quaternary structure, homotetramer. It depends on Mg(2+) as a cofactor. K(+) serves as cofactor.

The catalysed reaction is pyruvate + ATP = phosphoenolpyruvate + ADP + H(+). The protein operates within carbohydrate degradation; glycolysis; pyruvate from D-glyceraldehyde 3-phosphate: step 5/5. This Clostridium acetobutylicum (strain ATCC 824 / DSM 792 / JCM 1419 / IAM 19013 / LMG 5710 / NBRC 13948 / NRRL B-527 / VKM B-1787 / 2291 / W) protein is Pyruvate kinase (pyk).